The sequence spans 207 residues: Protein GrpE (207 aa).

Basic and acidic residues-rich tracts occupy residues 1–11 and 57–66; these read MEENRDVKNEE and DLVKNQEEEN. Residues 1 to 66 form a disordered region; that stretch reads MEENRDVKNE…DLVKNQEEEN (66 aa).

Belongs to the GrpE family. As to quaternary structure, homodimer.

The protein localises to the cytoplasm. Participates actively in the response to hyperosmotic and heat shock by preventing the aggregation of stress-denatured proteins, in association with DnaK and GrpE. It is the nucleotide exchange factor for DnaK and may function as a thermosensor. Unfolded proteins bind initially to DnaJ; upon interaction with the DnaJ-bound protein, DnaK hydrolyzes its bound ATP, resulting in the formation of a stable complex. GrpE releases ADP from DnaK; ATP binding to DnaK triggers the release of the substrate protein, thus completing the reaction cycle. Several rounds of ATP-dependent interactions between DnaJ, DnaK and GrpE are required for fully efficient folding. In Clostridium beijerinckii (strain ATCC 51743 / NCIMB 8052) (Clostridium acetobutylicum), this protein is Protein GrpE.